The primary structure comprises 65 residues: Antimicrobial peptide 1 (65 aa).

Residues 1–27 form the signal peptide; sequence MAKVSSAYLKFALVMILLLSVISAVMS. 3 disulfide bridges follow: C30–C47, C37–C51, and C46–C62.

This sequence belongs to the AMP family. In terms of tissue distribution, seed specific.

The protein localises to the secreted. Possesses antifungal activity. The chain is Antimicrobial peptide 1 from Phytolacca americana (American pokeweed).